The primary structure comprises 514 residues: Maturase K (514 aa).

This sequence belongs to the intron maturase 2 family. MatK subfamily.

It is found in the plastid. Its subcellular location is the chloroplast. Its function is as follows. Usually encoded in the trnK tRNA gene intron. Probably assists in splicing its own and other chloroplast group II introns. This chain is Maturase K, found in Lepidozamia peroffskyana (Peroffsky's lepidozamia).